The chain runs to 415 residues: Small RNA 2'-O-methyltransferase (415 aa).

S-adenosyl-L-methionine-binding residues include serine 99 and aspartate 117. Residues glutamate 169, glutamate 172, and histidine 173 each coordinate Mg(2+).

This sequence belongs to the methyltransferase superfamily. HEN1 family. Mg(2+) serves as cofactor.

The protein resides in the cytoplasm. The catalysed reaction is small RNA 3'-end nucleotide + S-adenosyl-L-methionine = small RNA 3'-end 2'-O-methylnucleotide + S-adenosyl-L-homocysteine + H(+). Its function is as follows. Methyltransferase that adds a 2'-O-methyl group at the 3'-end of piRNAs, a class of 24 to 30 nucleotide RNAs that are generated by a Dicer-independent mechanism and are primarily derived from transposons and other repeated sequence elements. This probably protects the 3'-end of piRNAs from uridylation activity and subsequent degradation. Stabilization of piRNAs is essential for gametogenesis. The sequence is that of Small RNA 2'-O-methyltransferase from Bombyx mori (Silk moth).